Reading from the N-terminus, the 249-residue chain is Probable transcriptional regulatory protein aq_1575 (249 aa).

It belongs to the TACO1 family.

It localises to the cytoplasm. The sequence is that of Probable transcriptional regulatory protein aq_1575 from Aquifex aeolicus (strain VF5).